A 354-amino-acid polypeptide reads, in one-letter code: UPF0283 protein YcjF (354 aa).

3 consecutive transmembrane segments (helical) span residues 71–91 (MVTV…VQWV), 101–121 (IALG…GSVV), and 214–234 (ESAL…FIAW).

This sequence belongs to the UPF0283 family.

The protein resides in the cell inner membrane. The sequence is that of UPF0283 protein YcjF (ycjF) from Yersinia enterocolitica.